The following is a 412-amino-acid chain: 43 kDa receptor-associated protein of the synapse (412 aa).

G2 carries the N-myristoyl glycine lipid modification. TPR repeat units follow at residues 6–39 (TKQQIEKGLQLYQANETGKALEIWQQVVERSTEL), 83–116 (TEAYLNLARGHEKLCEFSEAVAYCRTCLGAEGGP), 123–156 (GQVCLSMGNAFLGLSAFQKALECFEKALRYAHGN), 163–196 (CRVCCSLGAFYVQLKDYEKALFFPCKSAELVADY), 206–239 (AMSRYHMAAAYRKLGRMDDAMECCEESMKIALQH), 246–279 (ALCLLCFADIHRHRSDIGKALPRYESSLNIMTEI), and 286–319 (AHVLLNIAKCWMTEKKLDKTLGVVQKAEELADAV). Position 196 is a phosphotyrosine (Y196). The segment at 363–403 (CGLCGESIGDQNSQLQALPCSHLFHLKCLQTNGNRGCPNCK) adopts an RING-type zinc-finger fold. S405 carries the phosphoserine modification.

The protein belongs to the RAPsyn family.

It is found in the cell membrane. Its subcellular location is the postsynaptic cell membrane. The protein localises to the cytoplasm. The protein resides in the cytoskeleton. Its function is as follows. Postsynaptic protein required for clustering of nicotinic acetylcholine receptors (nAChRs) at the neuromuscular junction. It may link the receptor to the underlying postsynaptic cytoskeleton, possibly by direct association with actin or spectrin. This chain is 43 kDa receptor-associated protein of the synapse (RAPSN), found in Tetronarce californica (Pacific electric ray).